Here is a 105-residue protein sequence, read N- to C-terminus: Large ribosomal subunit protein uL24 (105 aa).

This sequence belongs to the universal ribosomal protein uL24 family. Part of the 50S ribosomal subunit.

In terms of biological role, one of two assembly initiator proteins, it binds directly to the 5'-end of the 23S rRNA, where it nucleates assembly of the 50S subunit. One of the proteins that surrounds the polypeptide exit tunnel on the outside of the subunit. The sequence is that of Large ribosomal subunit protein uL24 from Psychrobacter arcticus (strain DSM 17307 / VKM B-2377 / 273-4).